The chain runs to 1020 residues: 5'-3' exoribonuclease 3 (1020 aa).

The segment at 113–144 is disordered; sequence QQRSRRFRSAKDASDAAAEEERLREEFEREGR. Residues 121-144 are compositionally biased toward basic and acidic residues; that stretch reads SAKDASDAAAEEERLREEFEREGR. The CCHC-type zinc-finger motif lies at 262 to 279; sequence ERCFLCGQMGHFASNCEG. Disordered stretches follow at residues 411 to 440 and 452 to 483; these read QHQR…TVQP and RLAS…PGSS. Basic and acidic residues predominate over residues 414–433; it reads RQAERVKRDKAGKATKRMDD. Positions 487 to 523 form a coiled coil; it reads AIVDVENSLESDERENKEELKTKLKELIREKSDAFNS. A compositionally biased stretch (low complexity) spans 831–844; that stretch reads NNHGMHNNHGMHNN. Disordered regions lie at residues 831–859, 875–897, and 911–1020; these read NNHG…GRHL, TDRY…PQYV, and PGAQ…RHRY. Composition is skewed to low complexity over residues 911 to 923 and 960 to 972; these read PGAQ…APYQ and GNHQ…QQWH. The span at 1000–1020 shows a compositional bias: basic residues; it reads RGRGRGSHHHHDQGGNPRHRY.

The protein belongs to the 5'-3' exonuclease family. XRN2/RAT1 subfamily. As to expression, expressed in roots, leaves, stems and flowers.

The protein localises to the nucleus. Functionally, possesses 5'-&gt;3' exoribonuclease activity. Acts as an endogenous post-transcriptional gene silencing (PTGS) suppressor. Degrades miRNA-derived loops, excised during miRNA maturation in the nucleus. Required for proper development. Involved in pre-rRNA processing. Involved with XRN2 in the 5'-end exonucleolytic processing of 5.8S and 25S rRNAs. Contributes with XRN2 to polyadenylation-dependent nuclear RNA surveillance. Involved in the degradation of aberrant polyadenylated pre-rRNA through 5'-end processing. The chain is 5'-3' exoribonuclease 3 from Arabidopsis thaliana (Mouse-ear cress).